Reading from the N-terminus, the 146-residue chain is Large ribosomal subunit protein uL15 (146 aa).

Residues Met-1–Pro-56 form a disordered region. Composition is skewed to gly residues over residues Arg-21 to Gln-35 and Ser-42 to Gly-52.

This sequence belongs to the universal ribosomal protein uL15 family. As to quaternary structure, part of the 50S ribosomal subunit.

In terms of biological role, binds to the 23S rRNA. This is Large ribosomal subunit protein uL15 from Clostridium botulinum (strain Okra / Type B1).